A 26-amino-acid polypeptide reads, in one-letter code: Coenzyme PQQ synthesis protein A (26 aa).

Positions 16–20 (EINSY) form a cross-link, pyrroloquinoline quinone (Glu-Tyr).

This sequence belongs to the PqqA family.

The protein operates within cofactor biosynthesis; pyrroloquinoline quinone biosynthesis. Its function is as follows. Required for coenzyme pyrroloquinoline quinone (PQQ) biosynthesis. PQQ is probably formed by cross-linking a specific glutamate to a specific tyrosine residue and excising these residues from the peptide. In Gluconacetobacter diazotrophicus (strain ATCC 49037 / DSM 5601 / CCUG 37298 / CIP 103539 / LMG 7603 / PAl5), this protein is Coenzyme PQQ synthesis protein A.